Reading from the N-terminus, the 391-residue chain is Acetate kinase (391 aa).

A Mg(2+)-binding site is contributed by asparagine 4. Position 11 (lysine 11) interacts with ATP. A substrate-binding site is contributed by arginine 85. Aspartate 142 serves as the catalytic Proton donor/acceptor. Residues histidine 202–glycine 206, aspartate 277–arginine 279, and glycine 325–asparagine 329 each bind ATP. Glutamate 378 provides a ligand contact to Mg(2+).

The protein belongs to the acetokinase family. As to quaternary structure, homodimer. The cofactor is Mg(2+). It depends on Mn(2+) as a cofactor.

It localises to the cytoplasm. It carries out the reaction acetate + ATP = acetyl phosphate + ADP. Its pathway is metabolic intermediate biosynthesis; acetyl-CoA biosynthesis; acetyl-CoA from acetate: step 1/2. Catalyzes the formation of acetyl phosphate from acetate and ATP. Can also catalyze the reverse reaction. In Halalkalibacterium halodurans (strain ATCC BAA-125 / DSM 18197 / FERM 7344 / JCM 9153 / C-125) (Bacillus halodurans), this protein is Acetate kinase.